Here is a 412-residue protein sequence, read N- to C-terminus: Multidrug resistance protein MdtG (412 aa).

Transmembrane regions (helical) follow at residues 19–39 (LGCF…PLYV), 56–76 (LVFS…GGLA), 90–110 (LGMS…QFLL), 113–133 (ALLG…ATQI), 144–164 (TLST…GFLA), 171–191 (TVFF…LFLI), 222–242 (LFVT…ILTL), 254–274 (IAFI…MSAP), 288–308 (ILIV…FVQT), 317–337 (FLLG…LVYN), and 376–396 (AVFL…TLSL).

The protein belongs to the major facilitator superfamily. DHA1 family. MdtG (TC 2.A.1.2.20) subfamily.

It localises to the cell inner membrane. This Klebsiella pneumoniae (strain 342) protein is Multidrug resistance protein MdtG.